Here is a 77-residue protein sequence, read N- to C-terminus: Acyl carrier protein (77 aa).

The Carrier domain occupies 1-76 (MENFDKVKDI…DAVKYINSLE (76 aa)). Serine 36 carries the post-translational modification O-(pantetheine 4'-phosphoryl)serine.

The protein belongs to the acyl carrier protein (ACP) family. In terms of processing, 4'-phosphopantetheine is transferred from CoA to a specific serine of apo-ACP by AcpS. This modification is essential for activity because fatty acids are bound in thioester linkage to the sulfhydryl of the prosthetic group.

Its subcellular location is the cytoplasm. It functions in the pathway lipid metabolism; fatty acid biosynthesis. Carrier of the growing fatty acid chain in fatty acid biosynthesis. In Staphylococcus epidermidis (strain ATCC 12228 / FDA PCI 1200), this protein is Acyl carrier protein.